We begin with the raw amino-acid sequence, 58 residues long: UPF0434 protein NT01EI_2448 (58 aa).

This sequence belongs to the UPF0434 family.

The protein is UPF0434 protein NT01EI_2448 of Edwardsiella ictaluri (strain 93-146).